Reading from the N-terminus, the 38-residue chain is Potassium channel toxin alpha-KTx 2.13 (38 aa).

3 disulfides stabilise this stretch: Cys7–Cys29, Cys13–Cys34, and Cys17–Cys36.

It belongs to the short scorpion toxin superfamily. Potassium channel inhibitor family. Alpha-KTx 02 subfamily. In terms of tissue distribution, expressed by the venom gland.

The protein resides in the secreted. Selective inhibitor of voltage-gated potassium channels, blocks the Kv1.2/KCNA2 (Kd=1.3 nM) and Kv1.3/KCNA3 (Kd=7.2 nM) channels. Association and dissociation rates of the toxin are slower for Kv1.2/KCNA2 than for Kv1.3/KCNA3. In Centruroides suffusus (Durango bark scorpion), this protein is Potassium channel toxin alpha-KTx 2.13.